Reading from the N-terminus, the 146-residue chain is Leghemoglobin alpha (146 aa).

Residues 3–146 (AFTEKQEALV…LAAAIKKAYA (144 aa)) form the Globin domain. Nitrated tyrosine occurs at positions 26 and 31. Ser-46 provides a ligand contact to heme b. Ser-46 is subject to Phosphoserine. Residue His-62 participates in O2 binding. Heme b-binding residues include His-93 and Lys-96. Tyr-134 carries the post-translational modification Nitrated tyrosine.

Belongs to the plant globin family. As to quaternary structure, monomer. In terms of processing, nitrated mainly at Tyr-31 and, to a lower extent, at Tyr-26 and Tyr-134, in effective nodules and particularly in hypoxic conditions; this mechanism may play a protective role in the symbiosis by buffering toxic peroxynitrite NO(2)(-). Nitration level decrease during nodule senescence. Post-translationally, phosphorylation at Ser-46 disrupts the molecular environment of its porphyrin ring oxygen binding pocket, thus leading to a reduced oxygen consumption and to the delivery of oxygen O(2) to symbiosomes. In terms of tissue distribution, root nodules.

Its subcellular location is the cytoplasm. The protein localises to the cytosol. It localises to the nucleus. Leghemoglobin that reversibly binds oxygen O(2) through a pentacoordinated heme iron. In root nodules, facilitates the diffusion of oxygen to the bacteroids while preventing the bacterial nitrogenase from being inactivated by buffering dioxygen, nitric oxide and carbon monoxide, and promoting the formation of reactive oxygen species (ROS, e.g. H(2)O(2)). This role is essential for symbiotic nitrogen fixation (SNF). The protein is Leghemoglobin alpha of Phaseolus vulgaris (Kidney bean).